A 409-amino-acid polypeptide reads, in one-letter code: FADH(2)-dependent resorcinol hydroxylase, oxygenase component (409 aa).

The protein belongs to the HpaH/HsaA monooxygenase family. As to quaternary structure, the FADH(2)-dependent resorcinol hydroxylase is composed of two subunits, GraA (the oxygenase component) and GraD (the reductase component). Both subunits are required for activity.

It carries out the reaction resorcinol + FADH2 + O2 = benzene-1,2,4-triol + FAD + H2O + H(+). Its pathway is aromatic compound metabolism. Functionally, involved in the gamma-resorcylate (2,6-dihydroxybenzoate) catabolism. Oxygenase component of the resorcinol hydroxylase, which catalyzes the FADH(2)-dependent conversion of resorcinol to hydroxyquinol. This chain is FADH(2)-dependent resorcinol hydroxylase, oxygenase component, found in Rhizobium sp. (strain MTP-10005).